The following is a 241-amino-acid chain: Pre-rRNA-processing protein pno1 (241 aa).

The interval 48–71 is disordered; the sequence is APAKTSAEKKRGAKPQMRRVPIPP. Threonine 52 carries the phosphothreonine modification. A KH domain is found at 162-214; the sequence is GDHLSRAIGRIAGQGGKTKFAIENASRTRIVLADSKIHILGGFTNIRIAKDAV.

The protein belongs to the PNO1 family. Component of the small ribosomal subunit, ribosomal RNA processing complex (SSU RRP complex).

The protein localises to the cytoplasm. It is found in the nucleus. It localises to the nucleolus. Its function is as follows. Required for small ribosomal subunit (SSU) synthesis. Has a role in the processing of early nucleolar and late cytoplasmic pre-RNA species. In Schizosaccharomyces pombe (strain 972 / ATCC 24843) (Fission yeast), this protein is Pre-rRNA-processing protein pno1 (rbp28).